The following is a 257-amino-acid chain: Imidazole glycerol phosphate synthase subunit HisF (257 aa).

Residues Asp-12 and Asp-131 contribute to the active site.

It belongs to the HisA/HisF family. In terms of assembly, heterodimer of HisH and HisF.

Its subcellular location is the cytoplasm. It catalyses the reaction 5-[(5-phospho-1-deoxy-D-ribulos-1-ylimino)methylamino]-1-(5-phospho-beta-D-ribosyl)imidazole-4-carboxamide + L-glutamine = D-erythro-1-(imidazol-4-yl)glycerol 3-phosphate + 5-amino-1-(5-phospho-beta-D-ribosyl)imidazole-4-carboxamide + L-glutamate + H(+). It participates in amino-acid biosynthesis; L-histidine biosynthesis; L-histidine from 5-phospho-alpha-D-ribose 1-diphosphate: step 5/9. IGPS catalyzes the conversion of PRFAR and glutamine to IGP, AICAR and glutamate. The HisF subunit catalyzes the cyclization activity that produces IGP and AICAR from PRFAR using the ammonia provided by the HisH subunit. This chain is Imidazole glycerol phosphate synthase subunit HisF, found in Marinobacter nauticus (strain ATCC 700491 / DSM 11845 / VT8) (Marinobacter aquaeolei).